The following is a 275-amino-acid chain: 4,5-DOPA dioxygenase extradiol 1 (275 aa).

Positions 22, 60, 182, and 236 each coordinate Zn(2+).

The protein belongs to the DODA-type extradiol aromatic ring-opening dioxygenase family. It depends on Zn(2+) as a cofactor.

The catalysed reaction is L-dopa + O2 = 4-(L-alanin-3-yl)-2-hydroxy-cis,cis-muconate 6-semialdehyde + H(+). It functions in the pathway pigment biosynthesis; betalain biosynthesis. Opens the cyclic ring of dihydroxy-phenylalanine (DOPA) between carbons 4 and 5, thus producing an unstable seco-DOPA that rearranges nonenzymatically to betalamic acid. The protein is 4,5-DOPA dioxygenase extradiol 1 of Beta vulgaris (Sugar beet).